The chain runs to 216 residues: UPF0502 protein Ent638_1581 (216 aa).

It belongs to the UPF0502 family.

This Enterobacter sp. (strain 638) protein is UPF0502 protein Ent638_1581.